The following is a 239-amino-acid chain: Small ribosomal subunit protein uS3 (239 aa).

One can recognise a KH type-2 domain in the interval 40-108; sequence RGLLEKELYS…VALNVQEVQN (69 aa). The segment at 212–239 is disordered; the sequence is KPKARPELPKAEERPRRRRPAVRVKKEE. A compositionally biased stretch (basic and acidic residues) spans 215–226; it reads ARPELPKAEERP. Residues 227-239 show a composition bias toward basic residues; sequence RRRRPAVRVKKEE.

This sequence belongs to the universal ribosomal protein uS3 family. Part of the 30S ribosomal subunit. Forms a tight complex with proteins S10 and S14.

Functionally, binds the lower part of the 30S subunit head. Binds mRNA in the 70S ribosome, positioning it for translation. This is Small ribosomal subunit protein uS3 (rpsC) from Thermus thermophilus (strain ATCC BAA-163 / DSM 7039 / HB27).